Here is a 417-residue protein sequence, read N- to C-terminus: MAP kinase-interacting serine/threonine-protein kinase 1 (417 aa).

Residues 1–20 (MVSSQPVPIDDGGKRRKKKR) form a disordered region. The Protein kinase domain occupies 37–321 (RLTDELLGEG…AAQVLQHPWL (285 aa)). ATP-binding positions include 43-51 (LGEGAYAKV) and Lys66. Residue Asp158 is the Proton acceptor of the active site. Residues 397–417 (AHARKGGSHLTHTTVTSQGAT) form a disordered region. Positions 406–417 (LTHTTVTSQGAT) are enriched in polar residues.

Belongs to the protein kinase superfamily. CAMK Ser/Thr protein kinase family. Mg(2+) serves as cofactor.

It catalyses the reaction L-seryl-[protein] + ATP = O-phospho-L-seryl-[protein] + ADP + H(+). The catalysed reaction is L-threonyl-[protein] + ATP = O-phospho-L-threonyl-[protein] + ADP + H(+). In terms of biological role, may play a role in the response to environmental stress and cytokines. Appears to regulate translation by phosphorylating EIF4E, thus increasing the affinity of this protein for the 7-methylguanosine-containing mRNA cap. In Xenopus tropicalis (Western clawed frog), this protein is MAP kinase-interacting serine/threonine-protein kinase 1 (mknk1).